The following is a 404-amino-acid chain: Cysteine desulfurase IscS (404 aa).

Pyridoxal 5'-phosphate is bound by residues 75–76, N155, Q183, and 203–205; these read AT and SSH. K206 carries the N6-(pyridoxal phosphate)lysine modification. Residue T243 coordinates pyridoxal 5'-phosphate. The active-site Cysteine persulfide intermediate is the C328. Position 328 (C328) interacts with [2Fe-2S] cluster.

It belongs to the class-V pyridoxal-phosphate-dependent aminotransferase family. NifS/IscS subfamily. As to quaternary structure, homodimer. Forms a heterotetramer with IscU, interacts with other sulfur acceptors. Pyridoxal 5'-phosphate serves as cofactor.

The protein localises to the cytoplasm. The enzyme catalyses (sulfur carrier)-H + L-cysteine = (sulfur carrier)-SH + L-alanine. It participates in cofactor biosynthesis; iron-sulfur cluster biosynthesis. Its function is as follows. Master enzyme that delivers sulfur to a number of partners involved in Fe-S cluster assembly, tRNA modification or cofactor biosynthesis. Catalyzes the removal of elemental sulfur atoms from cysteine to produce alanine. Functions as a sulfur delivery protein for Fe-S cluster synthesis onto IscU, an Fe-S scaffold assembly protein, as well as other S acceptor proteins. The chain is Cysteine desulfurase IscS from Haemophilus influenzae (strain PittGG).